Here is a 276-residue protein sequence, read N- to C-terminus: NAD kinase (276 aa).

The active-site Proton acceptor is the aspartate 61. Residues 61–62, arginine 66, 135–136, arginine 146, histidine 163, aspartate 165, and alanine 200 contribute to the NAD(+) site; these read DG and NE.

The protein belongs to the NAD kinase family. Requires a divalent metal cation as cofactor.

Its subcellular location is the cytoplasm. It carries out the reaction NAD(+) + ATP = ADP + NADP(+) + H(+). Its function is as follows. Involved in the regulation of the intracellular balance of NAD and NADP, and is a key enzyme in the biosynthesis of NADP. Catalyzes specifically the phosphorylation on 2'-hydroxyl of the adenosine moiety of NAD to yield NADP. This Chloroflexus aggregans (strain MD-66 / DSM 9485) protein is NAD kinase.